A 349-amino-acid chain; its full sequence is Isopentenyl-diphosphate delta-isomerase (349 aa).

6-7 (RK) provides a ligand contact to substrate. FMN-binding positions include 62-64 (AMT), serine 93, and asparagine 122. Substrate is bound at residue glutamine 152. Glutamate 153 serves as a coordination point for Mg(2+). Residues lysine 184, threonine 214, 258 to 259 (GG), and 280 to 281 (AG) contribute to the FMN site.

Belongs to the IPP isomerase type 2 family. In terms of assembly, homooctamer. Dimer of tetramers. FMN serves as cofactor. NADPH is required as a cofactor. It depends on Mg(2+) as a cofactor.

The protein resides in the cytoplasm. It carries out the reaction isopentenyl diphosphate = dimethylallyl diphosphate. In terms of biological role, involved in the biosynthesis of isoprenoids. Catalyzes the 1,3-allylic rearrangement of the homoallylic substrate isopentenyl (IPP) to its allylic isomer, dimethylallyl diphosphate (DMAPP). The protein is Isopentenyl-diphosphate delta-isomerase of Bacillus cereus (strain AH820).